The sequence spans 252 residues: 2,5-diamino-6-ribosylamino-4(3H)-pyrimidinone 5'-phosphate reductase (252 aa).

NADP(+) contacts are provided by residues T80, D84, V166, and 189–193; that span reads GGIVI.

It belongs to the HTP reductase family. Homodimer.

It carries out the reaction 2,5-diamino-6-(1-D-ribitylamino)pyrimidin-4(3H)-one 5'-phosphate + NADP(+) = 2,5-diamino-6-(1-D-ribosylamino)pyrimidin-4(3H)-one 5'-phosphate + NADPH + H(+). The enzyme catalyses 2,5-diamino-6-(1-D-ribitylamino)pyrimidin-4(3H)-one 5'-phosphate + NAD(+) = 2,5-diamino-6-(1-D-ribosylamino)pyrimidin-4(3H)-one 5'-phosphate + NADH + H(+). Its pathway is cofactor biosynthesis; riboflavin biosynthesis. Catalyzes an early step in riboflavin biosynthesis, the NADPH-dependent reduction of the ribose side chain of 2,5-diamino-6-ribosylamino-4(3H)-pyrimidinone 5'-phosphate, yielding 2,5-diamino-6-ribitylamino-4(3H)-pyrimidinone 5'-phosphate. The sequence is that of 2,5-diamino-6-ribosylamino-4(3H)-pyrimidinone 5'-phosphate reductase (RIB7) from Kluyveromyces lactis (strain ATCC 8585 / CBS 2359 / DSM 70799 / NBRC 1267 / NRRL Y-1140 / WM37) (Yeast).